The chain runs to 677 residues: Methionine--tRNA ligase (677 aa).

The 'HIGH' region motif lies at 15–25; that stretch reads PYANGSIHLGH. Residues Cys146, Cys149, Cys159, and Cys162 each contribute to the Zn(2+) site. Positions 333–337 match the 'KMSKS' region motif; the sequence is KMSKS. Residue Lys336 participates in ATP binding. The tRNA-binding domain maps to 575–677; sequence DFAKIDLRVA…DGAKPGQQVK (103 aa).

It belongs to the class-I aminoacyl-tRNA synthetase family. MetG type 1 subfamily. Homodimer. Zn(2+) serves as cofactor.

The protein localises to the cytoplasm. The enzyme catalyses tRNA(Met) + L-methionine + ATP = L-methionyl-tRNA(Met) + AMP + diphosphate. Functionally, is required not only for elongation of protein synthesis but also for the initiation of all mRNA translation through initiator tRNA(fMet) aminoacylation. The sequence is that of Methionine--tRNA ligase from Salmonella agona (strain SL483).